Reading from the N-terminus, the 322-residue chain is Probable transposase for insertion sequence element ISA1214 (322 aa).

The protein belongs to the transposase 11 family.

Its function is as follows. Involved in the transposition of the insertion sequence ISA1214. The protein is Probable transposase for insertion sequence element ISA1214 of Archaeoglobus fulgidus (strain ATCC 49558 / DSM 4304 / JCM 9628 / NBRC 100126 / VC-16).